The following is a 63-amino-acid chain: Sperm protamine P1 (63 aa).

The interval 1–63 (MARYRRHSRS…RYSRRGRRRY (63 aa)) is disordered.

The protein belongs to the protamine P1 family. Testis.

It localises to the nucleus. It is found in the chromosome. Functionally, protamines substitute for histones in the chromatin of sperm during the haploid phase of spermatogenesis. They compact sperm DNA into a highly condensed, stable and inactive complex. The chain is Sperm protamine P1 (PRM1) from Phascogale tapoatafa (Common wambenger).